The sequence spans 451 residues: UPF0210 protein lin0538 (451 aa).

The protein belongs to the UPF0210 family. As to quaternary structure, homodimer.

The polypeptide is UPF0210 protein lin0538 (Listeria innocua serovar 6a (strain ATCC BAA-680 / CLIP 11262)).